A 296-amino-acid polypeptide reads, in one-letter code: HTH-type transcriptional activator AmpR (296 aa).

The region spanning 6 to 63 (LPLNALRAFEASARHLSFTRAAIELCVTQAAVSHQVKSLEERLGVALFKRLPRGLMLT) is the HTH lysR-type domain. Residues 23–42 (FTRAAIELCVTQAAVSHQVK) constitute a DNA-binding region (H-T-H motif). An includes the LysR substrate-binding / effector-binding domain, involved in binding to specific cell-wall-derived muropeptide products, some of which have signaling functions, leading to disparate responses such as antibiotic resistance, virulence, and host cell inflammation region spans residues 83-296 (LLERFEGGHY…EMAAVEARGR (214 aa)). In terms of domain architecture, LysR substrate-binding spans 91–289 (HYRDVLTVGA…AFRGWLLEMA (199 aa)).

The protein belongs to the LysR transcriptional regulatory family. As to quaternary structure, homodimer.

Its subcellular location is the cytoplasm. It localises to the membrane. Functionally, transcription regulator that plays a critical role in the expression of beta-lactamase AmpC, acting by positive regulation of the ampC gene. Has a wider role in the regulation of expression of genes involved in proteolysis, quorum sensing, and virulence. Acts by binding directly to the promoter region of the ampC gene. Probably does not regulate transcription of its own gene. The polypeptide is HTH-type transcriptional activator AmpR (ampR) (Pseudomonas aeruginosa (strain ATCC 15692 / DSM 22644 / CIP 104116 / JCM 14847 / LMG 12228 / 1C / PRS 101 / PAO1)).